We begin with the raw amino-acid sequence, 399 residues long: CCA-adding enzyme (399 aa).

Positions 32 and 35 each coordinate ATP. CTP-binding residues include Gly32 and Arg35. 2 residues coordinate Mg(2+): Asp45 and Asp47. ATP-binding residues include Arg116, Asp159, Arg162, Arg165, and Arg168. CTP-binding residues include Arg116, Asp159, Arg162, Arg165, and Arg168.

This sequence belongs to the tRNA nucleotidyltransferase/poly(A) polymerase family. Bacterial CCA-adding enzyme type 3 subfamily. As to quaternary structure, homodimer. It depends on Mg(2+) as a cofactor.

It catalyses the reaction a tRNA precursor + 2 CTP + ATP = a tRNA with a 3' CCA end + 3 diphosphate. It carries out the reaction a tRNA with a 3' CCA end + 2 CTP + ATP = a tRNA with a 3' CCACCA end + 3 diphosphate. Catalyzes the addition and repair of the essential 3'-terminal CCA sequence in tRNAs without using a nucleic acid template. Adds these three nucleotides in the order of C, C, and A to the tRNA nucleotide-73, using CTP and ATP as substrates and producing inorganic pyrophosphate. tRNA 3'-terminal CCA addition is required both for tRNA processing and repair. Also involved in tRNA surveillance by mediating tandem CCA addition to generate a CCACCA at the 3' terminus of unstable tRNAs. While stable tRNAs receive only 3'-terminal CCA, unstable tRNAs are marked with CCACCA and rapidly degraded. The polypeptide is CCA-adding enzyme (Streptococcus sanguinis (strain SK36)).